The primary structure comprises 1088 residues: PAN2-PAN3 deadenylation complex catalytic subunit pan2 (1088 aa).

WD repeat units follow at residues 16–56, 136–175, 178–224, and 270–309; these read VSTC…YTQF, HKDK…PVNK, AHTG…SLVP, and PLTS…SFSD. The interval 309-443 is linker; sequence DLKLPIQLPN…EDTISGPDSI (135 aa). A USP domain is found at 443–814; that stretch reads IPKFYQRPVI…IPIIVYYEKL (372 aa). In terms of domain architecture, Exonuclease spans 860 to 1033; the sequence is VGIDSEFVAL…EDALTALKLY (174 aa). Positions 863, 865, 972, and 1025 each coordinate a divalent metal cation.

Belongs to the peptidase C19 family. PAN2 subfamily. As to quaternary structure, forms a heterotrimer with an asymmetric homodimer of the regulatory subunit ppk26/pan3 to form the poly(A)-nuclease (PAN) deadenylation complex. A divalent metal cation is required as a cofactor.

The protein resides in the cytoplasm. The enzyme catalyses Exonucleolytic cleavage of poly(A) to 5'-AMP.. Positively regulated by the regulatory subunit ppk26/pan3. Its function is as follows. Catalytic subunit of the poly(A)-nuclease (PAN) deadenylation complex, one of two cytoplasmic mRNA deadenylases involved in mRNA turnover. PAN specifically shortens poly(A) tails of RNA and the activity is stimulated by poly(A)-binding protein pab1. PAN deadenylation is followed by rapid degradation of the shortened mRNA tails by the CCR4-NOT complex. Deadenylated mRNAs are then degraded by two alternative mechanisms, namely exosome-mediated 3'-5' exonucleolytic degradation, or deadenylation-dependent mRNA decaping and subsequent 5'-3' exonucleolytic degradation by xrn1. May also be involved in post-transcriptional maturation of mRNA poly(A) tails. In Schizosaccharomyces pombe (strain 972 / ATCC 24843) (Fission yeast), this protein is PAN2-PAN3 deadenylation complex catalytic subunit pan2.